Reading from the N-terminus, the 312-residue chain is tRNA pseudouridine synthase B (312 aa).

Aspartate 49 (nucleophile) is an active-site residue.

It belongs to the pseudouridine synthase TruB family. Type 1 subfamily.

It carries out the reaction uridine(55) in tRNA = pseudouridine(55) in tRNA. Responsible for synthesis of pseudouridine from uracil-55 in the psi GC loop of transfer RNAs. This Chelativorans sp. (strain BNC1) protein is tRNA pseudouridine synthase B.